The sequence spans 86 residues: Progonadoliberin-2 (86 aa).

The N-terminal stretch at 1-24 is a signal peptide; that stretch reads MVHICRLLVLMGMLLCLSAQFASS. At Gln25 the chain carries Pyrrolidone carboxylic acid. Gly34 carries the glycine amide modification.

The protein belongs to the GnRH family.

It is found in the secreted. In terms of biological role, stimulates the secretion of gonadotropins. This chain is Progonadoliberin-2 (gnrh2), found in Rutilus rutilus (Roach).